Consider the following 302-residue polypeptide: Short-chain dehydrogenase/reductase 3 (302 aa).

4 helical membrane passes run 9-29 (LVMFPLQMIYLVVKAAVGLVL), 170-190 (IVCLNSVLALSAIPGAIDYCT), 195-215 (AFAFMESLTLGLLDCPGVSAT), and 253-273 (AVQLNQALLLLPWTMHALVIL). Ser-175 contacts substrate. The active-site Proton acceptor is the Tyr-188.

Belongs to the short-chain dehydrogenases/reductases (SDR) family. Widely expressed with highest levels found in heart, placenta, lung, liver, kidney, pancreas, thyroid, testis, stomach, trachea and spinal cord. Lower levels found in skeletal muscle, intestine and lymph node. No expression detected in brain. In the retina, expressed in cone but not rod outer segments.

It localises to the membrane. The catalysed reaction is all-trans-retinol + NADP(+) = all-trans-retinal + NADPH + H(+). In terms of biological role, catalyzes the reduction of all-trans-retinal to all-trans-retinol in the presence of NADPH. The protein is Short-chain dehydrogenase/reductase 3 (DHRS3) of Homo sapiens (Human).